The primary structure comprises 527 residues: Plant-specific TFIIB-related protein PTF2 (527 aa).

The segment at 1–30 (MRCKRCNGSNFERDEDTGNSYCGGCGTLRE) adopts a TFIIB-type zinc-finger fold.

As to quaternary structure, can form homodimer. Interacts with TBP2. As to expression, expressed in shoot apical meristems, root tips, primordia of lateral roots, inflorescences, developing pollen grains and embryos.

It is found in the nucleus. Its function is as follows. Plant-specific TFIIB-related protein that plays important roles in pollen germination and embryogenesis, possibly by regulating gene expression through interaction with TBP2 and the subunits of RNA polymerases. Binds double-stranded DNA in vitro. The polypeptide is Plant-specific TFIIB-related protein PTF2 (Arabidopsis thaliana (Mouse-ear cress)).